Reading from the N-terminus, the 701-residue chain is MFVILHNKLIIYYLDMSNNKEILNRIQNLRKNLNQYNYEYYGLENPSVSDYEYDMCLKELIQLETQYPEFDSPNSPSKKVGGYISEKFNKVKHEIPMMSLSNAFDEEDLLKFDNDIKKAIGSSDFSYVVEPKIDGLSISVKYKDGNLIQAVTRGDGEIGEDVTQNIKTIKSLPLNIEYDKDLEIRGEVFLTKKDFEKINSDPNLTKKFANARNAASGSLRNLDSNITAKRNLSALFYYVPKATELKIAKQYDVLSWLDKQLIPISREIRHCNNIQGVIERISELTDTRDQFKYDIDGIVIKVNDFNHYEEIGYTSKFPKWAIAYKFPAVVKQTKLNSIDVTVGRTGRINYIANLDEILLEGSQVKKATLHNYDYIKDHEIMLNDIVEIYKAGEIIPKIIRSIKEKRDGSQVVFPEPTNCPSCDSKLVKKEQEVDLYCLNENCVEKQIQQIEYFSSRDAMNIEGLSISIISQLFRNKIINDAIDLYELAHKKEILIATKQKFYRKNDDGTKTEFERSLFKDKSFTNIIEAIEKSKSNSMEKFLTGLGIKYVGLRAAKALSKRFKSIEELAMATREEIEQVPDTGEKMSESLVNWFSDPKNQDLLWRAKKVGINFNYINEFNDVVVKNEHQKYMNKTFVITGSFNKSRNEIKNYIESVFNAKVSDSVSKKTDYLVVGENAGDSKLKKANDLKIEIITEPFWDN.

NAD(+)-binding positions include 50–54, 99–100, and Glu-130; these read DYEYD and SL. Lys-132 (N6-AMP-lysine intermediate) is an active-site residue. Arg-153, Glu-187, Lys-301, and Lys-325 together coordinate NAD(+). Cys-419, Cys-422, Cys-437, and Cys-442 together coordinate Zn(2+). In terms of domain architecture, BRCT spans 626–701; that stretch reads NEHQKYMNKT…EIITEPFWDN (76 aa).

The protein belongs to the NAD-dependent DNA ligase family. LigA subfamily. The cofactor is Mg(2+). Mn(2+) serves as cofactor.

It catalyses the reaction NAD(+) + (deoxyribonucleotide)n-3'-hydroxyl + 5'-phospho-(deoxyribonucleotide)m = (deoxyribonucleotide)n+m + AMP + beta-nicotinamide D-nucleotide.. In terms of biological role, DNA ligase that catalyzes the formation of phosphodiester linkages between 5'-phosphoryl and 3'-hydroxyl groups in double-stranded DNA using NAD as a coenzyme and as the energy source for the reaction. It is essential for DNA replication and repair of damaged DNA. The polypeptide is DNA ligase (Malacoplasma penetrans (strain HF-2) (Mycoplasma penetrans)).